Consider the following 494-residue polypeptide: UDP-N-acetylmuramoyl-L-alanyl-D-glutamate--2,6-diaminopimelate ligase (494 aa).

Residue Ser-30 participates in UDP-N-acetyl-alpha-D-muramoyl-L-alanyl-D-glutamate binding. 110–116 (GTNGKTS) provides a ligand contact to ATP. UDP-N-acetyl-alpha-D-muramoyl-L-alanyl-D-glutamate contacts are provided by residues 152–153 (TT), Ser-179, and Arg-187. An N6-carboxylysine modification is found at Lys-219. Residues Arg-380, 404 to 407 (DNPR), Gly-456, and Glu-460 each bind meso-2,6-diaminopimelate. A Meso-diaminopimelate recognition motif motif is present at residues 404–407 (DNPR).

The protein belongs to the MurCDEF family. MurE subfamily. It depends on Mg(2+) as a cofactor. Carboxylation is probably crucial for Mg(2+) binding and, consequently, for the gamma-phosphate positioning of ATP.

It localises to the cytoplasm. The enzyme catalyses UDP-N-acetyl-alpha-D-muramoyl-L-alanyl-D-glutamate + meso-2,6-diaminopimelate + ATP = UDP-N-acetyl-alpha-D-muramoyl-L-alanyl-gamma-D-glutamyl-meso-2,6-diaminopimelate + ADP + phosphate + H(+). It functions in the pathway cell wall biogenesis; peptidoglycan biosynthesis. In terms of biological role, catalyzes the addition of meso-diaminopimelic acid to the nucleotide precursor UDP-N-acetylmuramoyl-L-alanyl-D-glutamate (UMAG) in the biosynthesis of bacterial cell-wall peptidoglycan. The chain is UDP-N-acetylmuramoyl-L-alanyl-D-glutamate--2,6-diaminopimelate ligase from Alkaliphilus metalliredigens (strain QYMF).